The sequence spans 304 residues: Ribosomal RNA small subunit methyltransferase H (304 aa).

Residues 50–52 (GGH), aspartate 69, phenylalanine 97, aspartate 113, and glutamine 120 each bind S-adenosyl-L-methionine.

It belongs to the methyltransferase superfamily. RsmH family.

It is found in the cytoplasm. The catalysed reaction is cytidine(1402) in 16S rRNA + S-adenosyl-L-methionine = N(4)-methylcytidine(1402) in 16S rRNA + S-adenosyl-L-homocysteine + H(+). Functionally, specifically methylates the N4 position of cytidine in position 1402 (C1402) of 16S rRNA. In Rippkaea orientalis (strain PCC 8801 / RF-1) (Cyanothece sp. (strain PCC 8801)), this protein is Ribosomal RNA small subunit methyltransferase H.